Reading from the N-terminus, the 238-residue chain is Orotidine 5'-phosphate decarboxylase (238 aa).

Substrate-binding positions include Asp-10, Lys-32, 59 to 68 (DLKLHDIPNT), Thr-122, Arg-184, Gln-193, Gly-213, and Arg-214. Residue Lys-61 is the Proton donor of the active site.

This sequence belongs to the OMP decarboxylase family. Type 1 subfamily. In terms of assembly, homodimer.

It carries out the reaction orotidine 5'-phosphate + H(+) = UMP + CO2. The protein operates within pyrimidine metabolism; UMP biosynthesis via de novo pathway; UMP from orotate: step 2/2. Functionally, catalyzes the decarboxylation of orotidine 5'-monophosphate (OMP) to uridine 5'-monophosphate (UMP). The protein is Orotidine 5'-phosphate decarboxylase of Bacillus cereus (strain ATCC 10987 / NRS 248).